A 441-amino-acid polypeptide reads, in one-letter code: ATP-dependent RNA helicase sub2 (441 aa).

The span at 19–29 shows a compositional bias: low complexity; that stretch reads DAAATTAAPAA. A disordered region spans residues 19 to 43; sequence DAAATTAAPAANGAQDKKGDLTVSG. The Q motif signature appears at 58 to 86; that stretch reads TGFRDFLLKGELLRAITDCGFEHPSEVQQ. A Helicase ATP-binding domain is found at 89 to 264; it reads IPTAILNVDV…KKFMRNPLEV (176 aa). 102–109 provides a ligand contact to ATP; sequence AKSGLGKT. Positions 211-214 match the DEAD box motif; sequence DECD. One can recognise a Helicase C-terminal domain in the interval 276-437; the sequence is GLQQYYIKLS…EYPEGGVDSS (162 aa).

The protein belongs to the DEAD box helicase family. DECD subfamily.

It localises to the nucleus. It carries out the reaction ATP + H2O = ADP + phosphate + H(+). Its function is as follows. ATP-binding RNA helicase involved in transcription elongation and required for the export of mRNA out of the nucleus. SUB2 also plays a role in pre-mRNA splicing and spliceosome assembly. May be involved in rDNA and telomeric silencing, and maintenance of genome integrity. The chain is ATP-dependent RNA helicase sub2 (sub2) from Neosartorya fischeri (strain ATCC 1020 / DSM 3700 / CBS 544.65 / FGSC A1164 / JCM 1740 / NRRL 181 / WB 181) (Aspergillus fischerianus).